We begin with the raw amino-acid sequence, 148 residues long: Large ribosomal subunit protein uL15 (148 aa).

Residues 1–30 are compositionally biased toward basic residues; that stretch reads MPSRLRKTRKLRGHVSHGHGRIGKHRKHPG. The segment at 1 to 37 is disordered; sequence MPSRLRKTRKLRGHVSHGHGRIGKHRKHPGGRGNAGG. Histidine 39 carries the (3S)-3-hydroxyhistidine modification. An N6-acetyllysine mark is found at lysine 47 and lysine 55. The residue at position 68 (serine 68) is a Phosphoserine. Lysine 110 is subject to N6-acetyllysine.

Belongs to the universal ribosomal protein uL15 family. As to quaternary structure, component of the large ribosomal subunit. Hydroxylated on His-39 by MINA.

The protein resides in the cytoplasm. In terms of biological role, component of the large ribosomal subunit. The ribosome is a large ribonucleoprotein complex responsible for the synthesis of proteins in the cell. The chain is Large ribosomal subunit protein uL15 (Rpl27a) from Rattus norvegicus (Rat).